Consider the following 367-residue polypeptide: Probable cysteine protease RD19D (367 aa).

An N-terminal signal peptide occupies residues 1 to 22 (MVAKALAQLITCIILFCHVVAS). A propeptide spans 23–136 (VEDLTIRQVT…AEAPMVEVDG (114 aa)) (activation peptide). An N-linked (GlcNAc...) asparagine glycan is attached at asparagine 61. 2 cysteine pairs are disulfide-bonded: cysteine 158–cysteine 208 and cysteine 192–cysteine 241. Residue cysteine 161 is part of the active site. The N-linked (GlcNAc...) asparagine glycan is linked to asparagine 254. An intrachain disulfide couples cysteine 297 to cysteine 352. Catalysis depends on residues histidine 304 and asparagine 331.

This sequence belongs to the peptidase C1 family.

Functionally, probable thiol protease. The protein is Probable cysteine protease RD19D of Arabidopsis thaliana (Mouse-ear cress).